The chain runs to 138 residues: Outer membrane protein assembly factor BamE (138 aa).

A signal peptide spans 1-42 (MSHLTMIKTLNLRPFHSASALRKIVITSILGVAVTMSGCSLL).

It belongs to the BamE family. Part of the Bam complex.

The protein localises to the cell outer membrane. Part of the outer membrane protein assembly complex, which is involved in assembly and insertion of beta-barrel proteins into the outer membrane. The protein is Outer membrane protein assembly factor BamE of Psychrobacter arcticus (strain DSM 17307 / VKM B-2377 / 273-4).